The following is a 355-amino-acid chain: Hydroxylysine kinase (355 aa).

Asp-215 acts as the Proton acceptor in catalysis.

The protein belongs to the aminoglycoside phosphotransferase family.

It localises to the cytoplasm. The catalysed reaction is (5R)-5-hydroxy-L-lysine + GTP = (5R)-5-phosphooxy-L-lysine + GDP + H(+). Functionally, catalyzes the GTP-dependent phosphorylation of 5-hydroxy-L-lysine. The protein is Hydroxylysine kinase (hykk) of Danio rerio (Zebrafish).